We begin with the raw amino-acid sequence, 156 residues long: Small ribosomal subunit protein uS7 (156 aa).

It belongs to the universal ribosomal protein uS7 family. Part of the 30S ribosomal subunit. Contacts proteins S9 and S11.

One of the primary rRNA binding proteins, it binds directly to 16S rRNA where it nucleates assembly of the head domain of the 30S subunit. Is located at the subunit interface close to the decoding center, probably blocks exit of the E-site tRNA. This is Small ribosomal subunit protein uS7 from Desulforudis audaxviator (strain MP104C).